A 314-amino-acid chain; its full sequence is Mitochondrial MRF1 N(5)-glutamine methyltransferase MTQ1 (314 aa).

S-adenosyl-L-methionine is bound by residues 118–122 (FTGTG), aspartate 141, and asparagine 188. Residue 188–191 (NPPY) coordinates substrate.

It belongs to the protein N5-glutamine methyltransferase family.

It is found in the mitochondrion. The enzyme catalyses L-glutaminyl-[peptide chain release factor] + S-adenosyl-L-methionine = N(5)-methyl-L-glutaminyl-[peptide chain release factor] + S-adenosyl-L-homocysteine + H(+). Its function is as follows. Methylates MRF1 on 'Gln-287' using S-adenosyl L-methionine as methyl donor. The chain is Mitochondrial MRF1 N(5)-glutamine methyltransferase MTQ1 (MTQ1) from Saccharomyces cerevisiae (strain ATCC 204508 / S288c) (Baker's yeast).